Consider the following 230-residue polypeptide: Cytidylate kinase (230 aa).

12–20 serves as a coordination point for ATP; that stretch reads GPSGAGKGT.

It belongs to the cytidylate kinase family. Type 1 subfamily.

It localises to the cytoplasm. It catalyses the reaction CMP + ATP = CDP + ADP. The catalysed reaction is dCMP + ATP = dCDP + ADP. This chain is Cytidylate kinase, found in Shewanella halifaxensis (strain HAW-EB4).